Here is a 433-residue protein sequence, read N- to C-terminus: MRALLAHLLLCVLVVSASKGSRELQVPSDCGCLNGGTCMSNKYFSSIHWCNCPKKFGGQHCEIDKSKTCYEGNGHFYRGKASTDTMGRSCLAWNSATVLQQTYHAHRSDALQLGLGKHNYCRNPDNRRRPWCYVQVGLKQRVQECMVHNCADGKKPSSPPEELQFQCGQRTLRPRFKIVGGEFTTIENQPWFAAIYRRHRGGSVTYVCGGSLISPCWVVSATHCFINYPKKEDYIVYLGRSRLNSNTQGEMKFEVENLILHEDYSADTLAHHNDIALLKIRSKEGRCAQPSRTIQTICLPSMYNDPNDPPFGTSCEITGFGKENSTDYLYPEQLKMTVVKLVSHQKCQQPHYYGSEVTTKMLCAADPQWETDSCQGDSGGPLVCSIQGHMTLTGIVSWGRGCALKDKPGVYTRVSRFLPWIHSHTREQNGLAL.

Positions 1–20 (MRALLAHLLLCVLVVSASKG) are cleaved as a signal peptide. In terms of domain architecture, EGF-like spans 26–62 (VPSDCGCLNGGTCMSNKYFSSIHWCNCPKKFGGQHCE). 6 disulfide bridges follow: Cys-30-Cys-38, Cys-32-Cys-50, Cys-52-Cys-61, Cys-69-Cys-150, Cys-90-Cys-132, and Cys-121-Cys-145. Residues 33-56 (LNGGTCMSNKYFSSIHWCNCPKKF) are binds urokinase plasminogen activator surface receptor. Residues 69–150 (CYEGNGHFYR…RVQECMVHNC (82 aa)) enclose the Kringle domain. The segment at 151 to 177 (ADGKKPSSPPEELQFQCGQRTLRPRFK) is connecting peptide. Ser-157 is modified (phosphoserine). 6 cysteine pairs are disulfide-bonded: Cys-167–Cys-298, Cys-208–Cys-224, Cys-216–Cys-287, Cys-315–Cys-384, Cys-347–Cys-363, and Cys-374–Cys-402. Positions 178–426 (IVGGEFTTIE…FLPWIHSHTR (249 aa)) constitute a Peptidase S1 domain. Residues His-223 and Asp-274 each act as charge relay system in the active site. Asn-324 carries an N-linked (GlcNAc...) asparagine glycan. Ser-325 is subject to Phosphoserine. Ser-378 serves as the catalytic Charge relay system.

This sequence belongs to the peptidase S1 family. Found in high and low molecular mass forms. Each consists of two chains, A and B. The high molecular mass form contains a long chain A which is cleaved to yield a short chain A. Forms heterodimer with SERPINA5. Binds LRP1B; binding is followed by internalization and degradation. Interacts with MRC2. Interacts with PLAUR. In complex with SERPINE1, interacts with PLAUR/uPAR. Interacts with SORL1 and LRP1, either alone or in complex with SERPINE1; these interactions are abolished in the presence of LRPAP1/RAP. The ternary complex composed of PLAUR-PLAU-PAI1 also interacts with SORLA. Post-translationally, phosphorylation of Ser-157 and Ser-325 abolishes proadhesive ability but does not interfere with receptor binding. In terms of processing, produced as an inactive single-chain protein (pro-uPA or sc-uPA), is processed into the active disulfide-linked two-chain form of PLAU/uPA by a proteolytic event mediated, at least, by TMPRSS4.

The protein resides in the secreted. The enzyme catalyses Specific cleavage of Arg-|-Val bond in plasminogen to form plasmin.. With respect to regulation, inhibited by SERPINA5. Inhibited by SERPINE1. Its function is as follows. Specifically cleaves the zymogen plasminogen to form the active enzyme plasmin. This is Urokinase-type plasminogen activator (PLAU) from Papio cynocephalus (Yellow baboon).